The following is a 638-amino-acid chain: Actin-regulating kinase 1 (638 aa).

Residues 22-298 enclose the Protein kinase domain; that stretch reads VEIIKYLTSG…VYQLLKRISI (277 aa). ATP is bound by residues 28 to 36 and Lys-56; that span reads LTSGGFAQV. Asp-159 serves as the catalytic Proton acceptor. Ser-478 is subject to Phosphoserine. Over residues 482-515 the composition is skewed to polar residues; that stretch reads YSTRGNIKKNQSVKESLTSSSLPGTSFTPTSTKV. The interval 482–518 is disordered; it reads YSTRGNIKKNQSVKESLTSSSLPGTSFTPTSTKVNLK. A phosphoserine mark is found at Ser-522 and Ser-535. Residues 569-638 are disordered; sequence SEESFNARKM…LAGRKLSLDK (70 aa). A compositionally biased stretch (basic and acidic residues) spans 582–593; the sequence is KLHEKGEIDKPT. Positions 602–615 are interaction with SH3 domain of ABP1; it reads SKDKKTKPTPPPKP.

This sequence belongs to the protein kinase superfamily. Ser/Thr protein kinase family. As to quaternary structure, interacts with ABP1, which is required for proper actin patch localization.

The protein resides in the cytoplasm. It localises to the cytoskeleton. It is found in the actin patch. The enzyme catalyses L-seryl-[protein] + ATP = O-phospho-L-seryl-[protein] + ADP + H(+). It carries out the reaction L-threonyl-[protein] + ATP = O-phospho-L-threonyl-[protein] + ADP + H(+). In terms of biological role, involved in regulation of actin cytoskeleton organization and endocytosis. The protein is Actin-regulating kinase 1 (ARK1) of Saccharomyces cerevisiae (strain ATCC 204508 / S288c) (Baker's yeast).